The sequence spans 442 residues: 3-isopropylmalate dehydratase large subunit (442 aa).

Positions 347, 407, and 410 each coordinate [4Fe-4S] cluster.

The protein belongs to the aconitase/IPM isomerase family. LeuC type 1 subfamily. Heterodimer of LeuC and LeuD. [4Fe-4S] cluster serves as cofactor.

It carries out the reaction (2R,3S)-3-isopropylmalate = (2S)-2-isopropylmalate. It functions in the pathway amino-acid biosynthesis; L-leucine biosynthesis; L-leucine from 3-methyl-2-oxobutanoate: step 2/4. Catalyzes the isomerization between 2-isopropylmalate and 3-isopropylmalate, via the formation of 2-isopropylmaleate. This Buchnera aphidicola subsp. Macrosiphoniella ludovicianae protein is 3-isopropylmalate dehydratase large subunit.